A 465-amino-acid chain; its full sequence is Probable tRNA modification GTPase MnmE (465 aa).

Residues Arg-23, Glu-85, and Arg-124 each coordinate (6S)-5-formyl-5,6,7,8-tetrahydrofolate. The TrmE-type G domain occupies 221-384 (GTKVCIIGKP…LNNCILDLSS (164 aa)). Residues 231-236 (NVGKSS), 250-256 (TNFPGTT), and 275-278 (DTAG) each bind GTP. The Mg(2+) site is built by Ser-235 and Thr-256. Position 465 (Lys-465) interacts with (6S)-5-formyl-5,6,7,8-tetrahydrofolate.

It belongs to the TRAFAC class TrmE-Era-EngA-EngB-Septin-like GTPase superfamily. TrmE GTPase family. K(+) serves as cofactor.

The protein localises to the plastid. Its subcellular location is the chloroplast. Its function is as follows. Exhibits a very high intrinsic GTPase hydrolysis rate. Involved in the addition of a carboxymethylaminomethyl (cmnm) group at the wobble position (U34) of certain tRNAs, forming tRNA-cmnm(5)s(2)U34. This Cyanidium caldarium (Red alga) protein is Probable tRNA modification GTPase MnmE.